Consider the following 288-residue polypeptide: Glycine--tRNA ligase alpha subunit (288 aa).

Belongs to the class-II aminoacyl-tRNA synthetase family. In terms of assembly, tetramer of two alpha and two beta subunits.

Its subcellular location is the cytoplasm. The enzyme catalyses tRNA(Gly) + glycine + ATP = glycyl-tRNA(Gly) + AMP + diphosphate. The protein is Glycine--tRNA ligase alpha subunit of Rickettsia massiliae (strain Mtu5).